Reading from the N-terminus, the 146-residue chain is Hemoglobin subunit beta-2 (146 aa).

One can recognise a Globin domain in the interval 2–146 (KWTDKERAVI…VVSALGKQYC (145 aa)). Heme b contacts are provided by H63 and H92.

This sequence belongs to the globin family. As to quaternary structure, heterotetramer of two alpha chains and two beta chains. In terms of tissue distribution, red blood cells.

Functionally, involved in oxygen transport from gills to the various peripheral tissues. This chain is Hemoglobin subunit beta-2 (hbb2), found in Lycodes reticulatus (Arctic eelpout).